The sequence spans 306 residues: Protodermal factor 1 (306 aa).

An N-terminal signal peptide occupies residues 1-23 (MRGMVSFAVWALFAALLSQQLFA). Over residues 40–56 (PPSGSHGTPPSHTPPSS) the composition is skewed to low complexity. The disordered stretch occupies residues 40-156 (PPSGSHGTPP…VVTPPSPIVD (117 aa)). The span at 62–83 (PYDPSPSTPSHPSPPSHTPTPS) shows a compositional bias: pro residues. Low complexity predominate over residues 84–99 (TPSHTPTPHTPSHTPT). Residues 139–154 (SPPPRTPVVVTPPSPI) show a composition bias toward pro residues.

In terms of tissue distribution, confined to the shoot apical meristem (SAM) at the layer L1 in vegetative, infloresence and floral meristems, as well as in protoderm of organ primordia, including during embryogenesis. Also present in the tip of emerging lateral root primordia.

Functionally, may be involved in the regulation of meristem growth. The polypeptide is Protodermal factor 1 (PDF1) (Arabidopsis thaliana (Mouse-ear cress)).